Reading from the N-terminus, the 158-residue chain is Rhombotin-2 (158 aa).

LIM zinc-binding domains lie at 28-90 (LTCG…LFGQ) and 92-154 (GLCA…WTKL).

As to expression, expression becomes restricted to the ventral blood island (VBI) as the embryo develops. In late neurula and early tailbud embryos, also expressed in the dorsal lateral plate (DLP), the site of definitive hematopoiesis in the tadpole. Expression in the DLP diminishes during tailbud stages. Expressed in circulating blood cells of tadpoles. Also expressed in non-hematopoietic sites, including the tailbud region and the central nervous system of early neurula embryos.

Its subcellular location is the nucleus. Its function is as follows. Transcription factor that acts synergistically with tal1/scl and gata1 to specify embryonic dorsal mesoderm to a hematopoietic fate. Induces globin gene expression together with fgf. In Xenopus laevis (African clawed frog), this protein is Rhombotin-2.